We begin with the raw amino-acid sequence, 217 residues long: Cytidylate kinase (217 aa).

An ATP-binding site is contributed by 9–17 (GPAGSGKTT).

The protein belongs to the cytidylate kinase family. Type 1 subfamily.

The protein localises to the cytoplasm. The enzyme catalyses CMP + ATP = CDP + ADP. It catalyses the reaction dCMP + ATP = dCDP + ADP. This chain is Cytidylate kinase, found in Thermosipho melanesiensis (strain DSM 12029 / CIP 104789 / BI429).